The sequence spans 224 residues: UPF0758 protein VFMJ11_0123 (224 aa).

Residues 102–224 (ALTSPEHTKR…IVSFAERGWI (123 aa)) form the MPN domain. Residues His173, His175, and Asp186 each coordinate Zn(2+). The JAMM motif signature appears at 173 to 186 (HNHPSGVAEPSQAD).

Belongs to the UPF0758 family.

The polypeptide is UPF0758 protein VFMJ11_0123 (Aliivibrio fischeri (strain MJ11) (Vibrio fischeri)).